The following is a 197-amino-acid chain: Alkyl hydroperoxide reductase C (197 aa).

Positions 2–163 (VLVTQNAPNF…MIRMVDALDF (162 aa)) constitute a Thioredoxin domain. Cysteine 50 acts as the Cysteine sulfenic acid (-SOH) intermediate in catalysis.

Belongs to the peroxiredoxin family. AhpC/Prx1 subfamily. In terms of assembly, homodimer; disulfide-linked, upon oxidation. 5 homodimers assemble to form a ring-like decamer.

The protein resides in the cytoplasm. The enzyme catalyses a hydroperoxide + NADH + H(+) = an alcohol + NAD(+) + H2O. Its function is as follows. Thiol-specific peroxidase that catalyzes the reduction of hydrogen peroxide and organic hydroperoxides to water and alcohols, respectively. Plays a role in cell protection against oxidative stress by detoxifying peroxides. The polypeptide is Alkyl hydroperoxide reductase C (Buchnera aphidicola subsp. Acyrthosiphon pisum (strain APS) (Acyrthosiphon pisum symbiotic bacterium)).